A 491-amino-acid polypeptide reads, in one-letter code: MEEVQRRQHPHPRRSLKKLSEDSLTKQPEEVFDVLEKLGEGSYGSVFKAIHKESGQVVAIKQVPVESDLQEIIKEISIMQQCDSPHVVKYYGSYFKNTDLWIVMEYCGAGSVSDLIRIRNKTLTEDEIATILQSTLKGLEYLHFMRKIHRDIKAGNILLNNEGHAKLADFGVAGQLTDTMAKRNTVIGTPFWMAPEVIQEIGYNCVADIWSLGISAIEMAEGKPPYADIHPMRAIFMIPTNPPPTFRKPELWTDEFTDFVKQCLVKNPEQRAAATQLLQHPFIKNAKPVSILRDLITDMMEIKLKRQEEQQRDLDQDDEENSEEDDMDSGTMVRASAEDTGTMRAASTLSDGARTMIEHDSSTLDSQMGTMVINSGEDEEDGTMKRKEETIQQSKPSFLEYFEQKEKENQANSHSNRNAQALQNSSDNWKVPQDGDFESLKSWSVEELQRRLASLDPTMEQEIEEIRQRYQAKRQPILDAIDAKKRWQQNF.

The tract at residues M1–L24 is disordered. Over residues R7–K17 the composition is skewed to basic residues. The Protein kinase domain maps to F32–I283. Residues L38–V46 and K61 each bind ATP. D151 serves as the catalytic Proton acceptor. T185 is modified (phosphothreonine; by autocatalysis). A coiled-coil region spans residues L292 to R334. Disordered regions lie at residues Q307–S394 and E406–G435. Positions D315–D328 are enriched in acidic residues. Polar residues-rich tracts occupy residues T363 to I373 and Q410 to N428. The SARAH domain occupies F437–K484. Positions S442–Q475 form a coiled coil.

It belongs to the protein kinase superfamily. STE Ser/Thr protein kinase family. STE20 subfamily. In terms of assembly, homodimer; mediated via the coiled-coil region. Mg(2+) serves as cofactor. Post-translationally, proteolytically cleaved by caspase-3 during apoptosis at Asp-328 resulting in a 37 kDa form. Proteolytic cleavage results in kinase activation and nuclear translocation of the truncated form (MST1/N).

The protein localises to the cytoplasm. It localises to the nucleus. The catalysed reaction is L-seryl-[protein] + ATP = O-phospho-L-seryl-[protein] + ADP + H(+). It carries out the reaction L-threonyl-[protein] + ATP = O-phospho-L-threonyl-[protein] + ADP + H(+). With respect to regulation, inhibited by the C-terminal non-catalytic region. Activated by caspase-cleavage. Full activation also requires homodimerization and autophosphorylation of Thr-185. Stress-activated, pro-apoptotic kinase which, following caspase-cleavage, enters the nucleus and induces chromatin condensation followed by internucleosomal DNA fragmentation. Key component of the Hippo signaling pathway which plays a pivotal role in organ size control and tumor suppression by restricting proliferation and promoting apoptosis. The core of this pathway is composed of a kinase cascade wherein stk3/mst2 and stk4/mst1, in complex with its regulatory protein sav1, phosphorylates and activates lats1/2 in complex with its regulatory protein mob1, which in turn phosphorylates and inactivates yap1 oncoprotein and wwtr1/taz. Phosphorylation of yap1 by lats2 inhibits its translocation into the nucleus to regulate cellular genes important for cell proliferation, cell death, and cell migration. Phosphorylates 'Ser-14' of histone H2B (H2BS14ph) during apoptosis. The chain is Serine/threonine-protein kinase 3/4 (STK4) from Squalus acanthias (Spiny dogfish).